The following is a 212-amino-acid chain: Pyridoxine/pyridoxamine 5'-phosphate oxidase (212 aa).

Residues R8–Y11 and K66 contribute to the substrate site. FMN is bound by residues R61 to K66, F76 to T77, R82, K83, and Q105. The substrate site is built by Y123, R127, and S131. Residues Q140–S141 and W185 contribute to the FMN site. R191–H193 contributes to the substrate binding site. Residue R195 coordinates FMN.

Belongs to the pyridoxamine 5'-phosphate oxidase family. In terms of assembly, homodimer. Requires FMN as cofactor.

It carries out the reaction pyridoxamine 5'-phosphate + O2 + H2O = pyridoxal 5'-phosphate + H2O2 + NH4(+). The catalysed reaction is pyridoxine 5'-phosphate + O2 = pyridoxal 5'-phosphate + H2O2. It participates in cofactor metabolism; pyridoxal 5'-phosphate salvage; pyridoxal 5'-phosphate from pyridoxamine 5'-phosphate: step 1/1. It functions in the pathway cofactor metabolism; pyridoxal 5'-phosphate salvage; pyridoxal 5'-phosphate from pyridoxine 5'-phosphate: step 1/1. Catalyzes the oxidation of either pyridoxine 5'-phosphate (PNP) or pyridoxamine 5'-phosphate (PMP) into pyridoxal 5'-phosphate (PLP). In Shewanella putrefaciens (strain CN-32 / ATCC BAA-453), this protein is Pyridoxine/pyridoxamine 5'-phosphate oxidase.